An 856-amino-acid chain; its full sequence is Envelope glycoprotein gp160 (856 aa).

A signal peptide spans 1 to 31 (MRVKGIRRNYQHWWGWGTMLLGLLMICSATE). Over 32–685 (KLWVTVYYGV…ITNWLWYIKI (654 aa)) the chain is Extracellular. A disulfide bond links cysteine 53 and cysteine 73. N-linked (GlcNAc...) asparagine; by host glycosylation is found at asparagine 87, asparagine 129, asparagine 135, asparagine 140, asparagine 141, asparagine 146, asparagine 161, asparagine 165, asparagine 191, and asparagine 202. Cystine bridges form between cysteine 118–cysteine 210, cysteine 125–cysteine 201, cysteine 130–cysteine 162, cysteine 223–cysteine 252, and cysteine 233–cysteine 244. The interval 130-161 (CTDLRNTTNTNNSTANNNSNSEGTIKGGEMKN) is V1. Residues 162 to 201 (CSFNITTSIRDKMQKEYALLYKLDIVSIDNDSTSYRLISC) form a V2 region. Asparagine 246, asparagine 267, asparagine 281, asparagine 294, and asparagine 300 each carry an N-linked (GlcNAc...) asparagine; by host glycan. Residues 301–334 (CTRPNYNKRKRIHIGPGRAFYTTKNIIGTIRQAH) form a V3 region. Cysteine 301 and cysteine 335 are joined by a disulfide. N-linked (GlcNAc...) asparagine; by host glycosylation is found at asparagine 336, asparagine 343, asparagine 359, and asparagine 365. The segment at 367-377 (SSGGDPEIVMH) is CD4-binding loop. 2 disulfide bridges follow: cysteine 381-cysteine 445 and cysteine 388-cysteine 418. A V4 region spans residues 388–418 (CNTSPLFNSTWNGNNTWNNTTGSNNNITLQC). N-linked (GlcNAc...) asparagine; by host glycosylation is found at asparagine 395, asparagine 401, asparagine 405, asparagine 406, and asparagine 413. The tract at residues 421–433 (KQIINMWQEVGKA) is essential for CD4-binding; epitope recognized by the antibody YZ23. N-linked (GlcNAc...) asparagine; by host glycans are attached at residues asparagine 448 and asparagine 465. V5 regions lie at residues 461-473 (DTDTNDTEIFRPG) and 463-473 (DTNDTEIFRPG). Residues 514–533 (AAIGALFLGFLGAAGSTMGA) form a fusion peptide region. The immunosuppression stretch occupies residues 575-593 (KQLQARVLAVERYLKDQQL). Cysteines 599 and 605 form a disulfide. N-linked (GlcNAc...) asparagine; by host glycosylation is found at asparagine 612, asparagine 617, asparagine 626, and asparagine 638. Positions 634 to 668 (REIDNYTSLIYSLLEKSQTQQEKNEQELLELDKWA) form a coiled coil. Residues 663-684 (ELDKWASLWNWFDITNWLWYIK) are MPER; binding to GalCer. Residues 686–706 (FIMIVGGLVGLRIVFAVLSIV) form a helical membrane-spanning segment. Residues 707 to 856 (NRVRQGYSPL…IRQGLERALL (150 aa)) lie on the Cytoplasmic side of the membrane. Residues 713-716 (YSPL) carry the YXXL motif; contains endocytosis signal motif. The segment at 717 to 744 (SLQTRPPVPRGPDRPEGIEEEGGERDRD) is disordered. The short motif at 855–856 (LL) is the Di-leucine internalization motif element.

Belongs to the HIV-1 env protein family. The mature envelope protein (Env) consists of a homotrimer of non-covalently associated gp120-gp41 heterodimers. The resulting complex protrudes from the virus surface as a spike. There seems to be as few as 10 spikes on the average virion. Interacts with host CD4, CCR5 and CXCR4. Gp120 also interacts with the C-type lectins CD209/DC-SIGN and CLEC4M/DC-SIGNR (collectively referred to as DC-SIGN(R)). Gp120 and gp41 interact with GalCer. Gp120 interacts with host ITGA4/ITGB7 complex; on CD4+ T-cells, this interaction results in rapid activation of integrin ITGAL/LFA-1, which facilitates efficient cell-to-cell spreading of HIV-1. Gp120 interacts with cell-associated heparan sulfate; this interaction increases virus infectivity on permissive cells and may be involved in infection of CD4- cells. In terms of assembly, the mature envelope protein (Env) consists of a homotrimer of non-covalently associated gp120-gp41 heterodimers. The resulting complex protrudes from the virus surface as a spike. There seems to be as few as 10 spikes on the average virion. In terms of processing, highly glycosylated by host. The high number of glycan on the protein is reffered to as 'glycan shield' because it contributes to hide protein sequence from adaptive immune system. Palmitoylation of the transmembrane protein and of Env polyprotein (prior to its proteolytic cleavage) is essential for their association with host cell membrane lipid rafts. Palmitoylation is therefore required for envelope trafficking to classical lipid rafts, but not for viral replication. Post-translationally, specific enzymatic cleavages in vivo yield mature proteins. Envelope glycoproteins are synthesized as an inactive precursor that is heavily N-glycosylated and processed likely by host cell furin in the Golgi to yield the mature SU and TM proteins. The cleavage site between SU and TM requires the minimal sequence [KR]-X-[KR]-R. About 2 of the 9 disulfide bonds of gp41 are reduced by P4HB/PDI, following binding to CD4 receptor.

The protein resides in the virion membrane. Its subcellular location is the host cell membrane. It is found in the host endosome membrane. In terms of biological role, oligomerizes in the host endoplasmic reticulum into predominantly trimers. In a second time, gp160 transits in the host Golgi, where glycosylation is completed. The precursor is then proteolytically cleaved in the trans-Golgi and thereby activated by cellular furin or furin-like proteases to produce gp120 and gp41. Its function is as follows. Attaches the virus to the host lymphoid cell by binding to the primary receptor CD4. This interaction induces a structural rearrangement creating a high affinity binding site for a chemokine coreceptor like CXCR4 and/or CCR5. Acts as a ligand for CD209/DC-SIGN and CLEC4M/DC-SIGNR, which are respectively found on dendritic cells (DCs), and on endothelial cells of liver sinusoids and lymph node sinuses. These interactions allow capture of viral particles at mucosal surfaces by these cells and subsequent transmission to permissive cells. HIV subverts the migration properties of dendritic cells to gain access to CD4+ T-cells in lymph nodes. Virus transmission to permissive T-cells occurs either in trans (without DCs infection, through viral capture and transmission), or in cis (following DCs productive infection, through the usual CD4-gp120 interaction), thereby inducing a robust infection. In trans infection, bound virions remain infectious over days and it is proposed that they are not degraded, but protected in non-lysosomal acidic organelles within the DCs close to the cell membrane thus contributing to the viral infectious potential during DCs' migration from the periphery to the lymphoid tissues. On arrival at lymphoid tissues, intact virions recycle back to DCs' cell surface allowing virus transmission to CD4+ T-cells. Acts as a class I viral fusion protein. Under the current model, the protein has at least 3 conformational states: pre-fusion native state, pre-hairpin intermediate state, and post-fusion hairpin state. During fusion of viral and target intracellular membranes, the coiled coil regions (heptad repeats) assume a trimer-of-hairpins structure, positioning the fusion peptide in close proximity to the C-terminal region of the ectodomain. The formation of this structure appears to drive apposition and subsequent fusion of viral and target cell membranes. Complete fusion occurs in host cell endosomes and is dynamin-dependent, however some lipid transfer might occur at the plasma membrane. The virus undergoes clathrin-dependent internalization long before endosomal fusion, thus minimizing the surface exposure of conserved viral epitopes during fusion and reducing the efficacy of inhibitors targeting these epitopes. Membranes fusion leads to delivery of the nucleocapsid into the cytoplasm. This is Envelope glycoprotein gp160 from Homo sapiens (Human).